Consider the following 884-residue polypeptide: Exocyst complex component 2 (884 aa).

Residues 1–11 (MEENAQARERL) show a composition bias toward basic and acidic residues. The interval 1 to 27 (MEENAQARERLPPTVTGLSPTEGVPGT) is disordered. The IPT/TIG domain occupies 13 to 98 (PTVTGLSPTE…GSSNVKFRVF (86 aa)). Coiled coils occupy residues 178–206 (ADATIEDLRIAIKNMELSKQNEAKRSEEM) and 846–874 (NQRLQQCLKNMRTTMRMALQSLEQHAENL).

Belongs to the SEC5 family. As to quaternary structure, the exocyst complex is composed of sec-3/exoc1, sec-5/exoc2, sec-6/exoc3, sec-8/exoc4, sec-10/exoc5, sec-15/exoc6, exo-70/exoc7 and exo-84/exoc8.

Component of the exocyst complex involved in the docking of exocytic vesicles with fusion sites on the plasma membrane. This Caenorhabditis elegans protein is Exocyst complex component 2 (sec-5).